A 558-amino-acid chain; its full sequence is Receptor-like kinase LIP2 (558 aa).

The interval 1–45 (MHCFPCFSSPKNKKSSTTNETNDNNEPKPDDRRRAEETEEIEQSE) is disordered. Residues 15-24 (SSTTNETNDN) show a composition bias toward low complexity. Residues 25–36 (NEPKPDDRRRAE) show a composition bias toward basic and acidic residues. Threonine 53 bears the Phosphothreonine mark. Residues 64 to 343 (FRQECLLGEG…SDVMVALSFL (280 aa)) form the Protein kinase domain. ATP is bound by residues 70-78 (LGEGGFGRV) and lysine 93. The residue at position 138 (tyrosine 138) is a Phosphotyrosine. Aspartate 191 serves as the catalytic Proton acceptor. Residues serine 195 and serine 227 each carry the phosphoserine modification. Residue threonine 233 is modified to Phosphothreonine. The residue at position 241 (tyrosine 241) is a Phosphotyrosine. The disordered stretch occupies residues 372 to 558 (HDSNLVSPPP…SDVAIDSIKE (187 aa)). Basic and acidic residues predominate over residues 401 to 418 (ESEKESVSKNEYKKKHEE). The span at 419-431 (EDSSMESDDESDS) shows a compositional bias: acidic residues. The span at 432-448 (NSEHEKDQPPKPIDEKN) shows a compositional bias: basic and acidic residues. A compositionally biased stretch (low complexity) spans 473-486 (SKSSQKSNDESTSS). Basic and acidic residues-rich tracts occupy residues 488 to 500 (YDSD…KGKE), 508 to 524 (EEKH…KTDD), and 547 to 558 (IKSDVAIDSIKE).

This sequence belongs to the protein kinase superfamily. Ser/Thr protein kinase family. Interacts with PRK6. Palmitoylated. Expressed in mature pollen and in germinating pollen tubes.

The protein resides in the cell membrane. Functionally, involved in pollen tube guidance into micropyle. Participates in perception of the ovule-secreted peptide signal LURE1. This is Receptor-like kinase LIP2 from Arabidopsis thaliana (Mouse-ear cress).